The chain runs to 348 residues: Erythronate-4-phosphate dehydrogenase (348 aa).

Residues threonine 46 and threonine 67 each contribute to the substrate site. Aspartate 147 serves as a coordination point for NAD(+). The active site involves arginine 209. An NAD(+)-binding site is contributed by aspartate 233. Residue glutamate 238 is part of the active site. Residue histidine 255 is the Proton donor of the active site. Residue glycine 258 coordinates NAD(+). Tyrosine 259 is a substrate binding site.

This sequence belongs to the D-isomer specific 2-hydroxyacid dehydrogenase family. PdxB subfamily. In terms of assembly, homodimer.

Its subcellular location is the cytoplasm. The enzyme catalyses 4-phospho-D-erythronate + NAD(+) = (R)-3-hydroxy-2-oxo-4-phosphooxybutanoate + NADH + H(+). It functions in the pathway cofactor biosynthesis; pyridoxine 5'-phosphate biosynthesis; pyridoxine 5'-phosphate from D-erythrose 4-phosphate: step 2/5. Functionally, catalyzes the oxidation of erythronate-4-phosphate to 3-hydroxy-2-oxo-4-phosphonooxybutanoate. The chain is Erythronate-4-phosphate dehydrogenase from Bacteroides thetaiotaomicron (strain ATCC 29148 / DSM 2079 / JCM 5827 / CCUG 10774 / NCTC 10582 / VPI-5482 / E50).